We begin with the raw amino-acid sequence, 291 residues long: Popeye domain-containing protein 3 (291 aa).

The N-linked (GlcNAc...) asparagine glycan is linked to asparagine 4. 3 helical membrane passes run 27-44, 48-70, and 77-99; these read GAIYHLASILFVVGFMGG, FGLLYVFSLLGLGFLSSAVWAWV, and IFSWNFVLFVICFMQFVHIAYQV.

It belongs to the popeye family. In terms of tissue distribution, expressed in cardiac and skeletal muscle.

It is found in the membrane. Functionally, may play a role in the maintenance of heart function mediated, at least in part, through cAMP-binding. May play a role in the regulation of KCNK2-mediated current amplitude. The chain is Popeye domain-containing protein 3 (Popdc3) from Mus musculus (Mouse).